A 245-amino-acid polypeptide reads, in one-letter code: MSQSTFVLRRNGFTFKQFFVAHDRCAMKVGTDGILLGAWAPVAGVKRCLDIGAGSGLLALMLAQRTDDSVMIDAVELESEAAAQAQENINQSPWAERINVHTADIQQWITQQTVRFDLIISNPPYYQQGVECSTPQREQARYTTTLDHPSLLTCAAECITEEGFFCVVLPEQIGNGFTELALSMGWHLRLRTDVAENEARLPHRVLLAFSPQAGECFSDRLVIRGPDQNYSEAYTALTQAFYLFM.

This sequence belongs to the methyltransferase superfamily. tRNA (adenine-N(6)-)-methyltransferase family.

It localises to the cytoplasm. It carries out the reaction adenosine(37) in tRNA1(Val) + S-adenosyl-L-methionine = N(6)-methyladenosine(37) in tRNA1(Val) + S-adenosyl-L-homocysteine + H(+). In terms of biological role, specifically methylates the adenine in position 37 of tRNA(1)(Val) (anticodon cmo5UAC). The sequence is that of tRNA1(Val) (adenine(37)-N6)-methyltransferase from Escherichia coli O7:K1 (strain IAI39 / ExPEC).